The sequence spans 145 residues: MNGRVDYLVTEEEINLTRGPSGLGFNIVGGTDQQYVSNDSGIYVSRIKENGAAALDGRLQEGDKILSVNGQDLKNLLHQDAVDLFRNAGYAVSLRVQHRLQVQNGPIGHRGEGDPSGIPIFMVLVPVFALTMVAAWAFMRYRQQL.

At 1 to 117 (MNGRVDYLVT…GHRGEGDPSG (117 aa)) the chain is on the cytoplasmic side. The 88-residue stretch at 13 to 100 (EINLTRGPSG…AVSLRVQHRL (88 aa)) folds into the PDZ domain. The chain crosses the membrane as a helical span at residues 118–138 (IPIFMVLVPVFALTMVAAWAF). Over 139-145 (MRYRQQL) the chain is Mitochondrial intermembrane.

As to quaternary structure, binds (via the PDZ domain) to isoform 2A of SYNJ2 (via the unique motif in the C-terminus). Interacts (via C-terminus) with RALBP1. Interacts (via PDZ domain) with ACVR2A (via C-terminus) and ACVR2B (via C-terminus). Forms a ternary complex with ACVR2A and RALBP1. Interacts with MAPK12. Interacts with DLL1; enhances DLL1 protein stability, and promotes notch signaling in endothelial cells.

The protein resides in the mitochondrion outer membrane. In terms of biological role, regulates endocytosis of activin type 2 receptor kinases through the Ral/RALBP1-dependent pathway and may be involved in suppression of activin-induced signal transduction. This chain is Synaptojanin-2-binding protein (SYNJ2BP), found in Homo sapiens (Human).